A 392-amino-acid chain; its full sequence is Outer membrane protein assembly factor BamB (392 aa).

The N-terminal stretch at 1–19 is a signal peptide; sequence MQLRKLLLPGLLSVTLLSG. C20 carries N-palmitoyl cysteine lipidation. A lipid anchor (S-diacylglycerol cysteine) is attached at C20.

This sequence belongs to the BamB family. As to quaternary structure, part of the Bam complex, which is composed of the outer membrane protein BamA, and four lipoproteins BamB, BamC, BamD and BamE.

It is found in the cell outer membrane. Functionally, part of the outer membrane protein assembly complex, which is involved in assembly and insertion of beta-barrel proteins into the outer membrane. This is Outer membrane protein assembly factor BamB from Salmonella typhimurium (strain LT2 / SGSC1412 / ATCC 700720).